A 205-amino-acid chain; its full sequence is Methylthioribulose-1-phosphate dehydratase (205 aa).

2 residues coordinate Zn(2+): H96 and H98.

Belongs to the aldolase class II family. MtnB subfamily. It depends on Zn(2+) as a cofactor.

It catalyses the reaction 5-(methylsulfanyl)-D-ribulose 1-phosphate = 5-methylsulfanyl-2,3-dioxopentyl phosphate + H2O. It participates in amino-acid biosynthesis; L-methionine biosynthesis via salvage pathway; L-methionine from S-methyl-5-thio-alpha-D-ribose 1-phosphate: step 2/6. Catalyzes the dehydration of methylthioribulose-1-phosphate (MTRu-1-P) into 2,3-diketo-5-methylthiopentyl-1-phosphate (DK-MTP-1-P). This is Methylthioribulose-1-phosphate dehydratase from Pseudomonas aeruginosa (strain LESB58).